Reading from the N-terminus, the 142-residue chain is Succinate dehydrogenase assembly factor 2, mitochondrial (142 aa).

It belongs to the SDHAF2 family. In terms of assembly, interacts with the flavoprotein subunit within the SDH catalytic dimer.

The protein localises to the mitochondrion matrix. In terms of biological role, plays an essential role in the assembly of succinate dehydrogenase (SDH), an enzyme complex (also referred to as respiratory complex II) that is a component of both the tricarboxylic acid (TCA) cycle and the mitochondrial electron transport chain, and which couples the oxidation of succinate to fumarate with the reduction of ubiquinone (coenzyme Q) to ubiquinol. Required for flavinylation (covalent attachment of FAD) of the flavoprotein subunit of the SDH catalytic dimer. The polypeptide is Succinate dehydrogenase assembly factor 2, mitochondrial (Debaryomyces hansenii (strain ATCC 36239 / CBS 767 / BCRC 21394 / JCM 1990 / NBRC 0083 / IGC 2968) (Yeast)).